The sequence spans 214 residues: Large ribosomal subunit protein uL3 (214 aa).

The disordered stretch occupies residues 119-159 (GVKRHGFAGGPKTHGQSDRHRAPGSIGPTTDPGRVHKGKRM).

The protein belongs to the universal ribosomal protein uL3 family. As to quaternary structure, part of the 50S ribosomal subunit. Forms a cluster with proteins L14 and L19.

Its function is as follows. One of the primary rRNA binding proteins, it binds directly near the 3'-end of the 23S rRNA, where it nucleates assembly of the 50S subunit. In Thermomicrobium roseum (strain ATCC 27502 / DSM 5159 / P-2), this protein is Large ribosomal subunit protein uL3.